The sequence spans 294 residues: N-acetylmuramic acid 6-phosphate etherase (294 aa).

The SIS domain maps to 54–217 (VIKSFEEEGR…STASMIGVGK (164 aa)). The Proton donor role is filled by Glu-82. The active site involves Glu-113.

Belongs to the GCKR-like family. MurNAc-6-P etherase subfamily. As to quaternary structure, homodimer.

The enzyme catalyses N-acetyl-D-muramate 6-phosphate + H2O = N-acetyl-D-glucosamine 6-phosphate + (R)-lactate. It participates in amino-sugar metabolism; N-acetylmuramate degradation. In terms of biological role, specifically catalyzes the cleavage of the D-lactyl ether substituent of MurNAc 6-phosphate, producing GlcNAc 6-phosphate and D-lactate. The protein is N-acetylmuramic acid 6-phosphate etherase of Bacillus cereus (strain ATCC 14579 / DSM 31 / CCUG 7414 / JCM 2152 / NBRC 15305 / NCIMB 9373 / NCTC 2599 / NRRL B-3711).